The following is a 183-amino-acid chain: A-type ATP synthase subunit E (183 aa).

It belongs to the V-ATPase E subunit family. Has multiple subunits with at least A(3), B(3), C, D, E, F, H, I and proteolipid K(x).

Its subcellular location is the cell membrane. Functionally, component of the A-type ATP synthase that produces ATP from ADP in the presence of a proton gradient across the membrane. The protein is A-type ATP synthase subunit E of Methanosarcina barkeri (strain Fusaro / DSM 804).